The following is a 365-amino-acid chain: 1-aminocyclopropane-1-carboxylate oxidase homolog 9 (365 aa).

Positions 214-313 (KGLLMLCHYY…RISVACFVSS (100 aa)) constitute a Fe2OG dioxygenase domain. Positions 238, 240, and 294 each coordinate Fe cation. Residue Arg-304 participates in 2-oxoglutarate binding.

The protein belongs to the iron/ascorbate-dependent oxidoreductase family. It depends on Fe(2+) as a cofactor.

The chain is 1-aminocyclopropane-1-carboxylate oxidase homolog 9 from Arabidopsis thaliana (Mouse-ear cress).